The chain runs to 321 residues: Reticulon-2 (321 aa).

Disordered stretches follow at residues 1–36 (MGHV…SPVT) and 65–85 (PPVR…PREE). One can recognise a Reticulon domain in the interval 134-321 (VKDLLYWRDI…TVKKPPAKQK (188 aa)). The next 2 helical transmembrane spans lie at 163–183 (FSVI…TLTL) and 250–270 (FLVI…ITVL).

It localises to the endoplasmic reticulum membrane. It is found in the sarcoplasmic reticulum membrane. The protein resides in the cell membrane. The protein localises to the sarcolemma. Its subcellular location is the T-tubule. It localises to the cytoplasm. It is found in the myofibril. The protein resides in the sarcomere. The protein localises to the z line. Its subcellular location is the cytoskeleton. Its function is as follows. Inhibits amyloid precursor protein processing, probably by blocking BACE1 activity. Enhances trafficking of the glutamate transporter SLC1A1/EAAC1 from the endoplasmic reticulum to the cell surface. Plays a role in the translocation of SLC2A4/GLUT4 from intracellular membranes to the cell membrane which facilitates the uptake of glucose into the cell. The polypeptide is Reticulon-2 (Xenopus tropicalis (Western clawed frog)).